Consider the following 179-residue polypeptide: Probable chorismate pyruvate-lyase (179 aa).

Residues Arg82, Leu120, and Glu165 each coordinate substrate.

It belongs to the UbiC family.

It is found in the cytoplasm. The catalysed reaction is chorismate = 4-hydroxybenzoate + pyruvate. It functions in the pathway cofactor biosynthesis; ubiquinone biosynthesis. Functionally, removes the pyruvyl group from chorismate, with concomitant aromatization of the ring, to provide 4-hydroxybenzoate (4HB) for the ubiquinone pathway. This chain is Probable chorismate pyruvate-lyase, found in Vibrio cholerae serotype O1 (strain ATCC 39315 / El Tor Inaba N16961).